The primary structure comprises 226 residues: Guanylate kinase (226 aa).

In terms of domain architecture, Guanylate kinase-like spans 13–193 (GLLLVLSAPS…ALAQLQAIVR (181 aa)). 20-27 (APSGAGKT) is a binding site for ATP.

The protein belongs to the guanylate kinase family.

It localises to the cytoplasm. The enzyme catalyses GMP + ATP = GDP + ADP. Its function is as follows. Essential for recycling GMP and indirectly, cGMP. In Anaeromyxobacter dehalogenans (strain 2CP-C), this protein is Guanylate kinase.